Here is a 193-residue protein sequence, read N- to C-terminus: Ion-translocating oxidoreductase complex subunit A (193 aa).

6 helical membrane-spanning segments follow: residues 5-25, 39-59, 65-85, 102-122, 134-154, and 171-191; these read ILLIISTALINNFVLVKFLGL, IGMGMATTFVLTVASLSAYLV, IPLEAEFLRTLVFILVIAVIV, LLGIYLPLITTNCAVLGVALL, VLYGFGAAAGFSLVLVLFSAL, and SIALITAGLMSLAFMGFTGLV.

It belongs to the NqrDE/RnfAE family. As to quaternary structure, the complex is composed of six subunits: RnfA, RnfB, RnfC, RnfD, RnfE and RnfG.

It is found in the cell inner membrane. Functionally, part of a membrane-bound complex that couples electron transfer with translocation of ions across the membrane. This is Ion-translocating oxidoreductase complex subunit A from Glaesserella parasuis serovar 5 (strain SH0165) (Haemophilus parasuis).